Consider the following 27-residue polypeptide: Larval-specific very high density lipoprotein (27 aa).

As to quaternary structure, homodimer. As to expression, hemolymph.

Its subcellular location is the secreted. The protein resides in the extracellular space. Its function is as follows. Unknown (it might play a role in lipid transport and/or storage protein metabolism during metamorphosis). This chain is Larval-specific very high density lipoprotein, found in Apis mellifera (Honeybee).